The following is a 481-amino-acid chain: Cysteine--tRNA ligase (481 aa).

Position 29 (Cys-29) interacts with Zn(2+). The 'HIGH' region signature appears at 31–41 (PTTYDYIHLGN). Residues Cys-209, His-234, and Glu-238 each coordinate Zn(2+). Residues 267–271 (KMSKS) carry the 'KMSKS' region motif. Lys-270 contacts ATP.

This sequence belongs to the class-I aminoacyl-tRNA synthetase family. Monomer. Zn(2+) is required as a cofactor.

It is found in the cytoplasm. The catalysed reaction is tRNA(Cys) + L-cysteine + ATP = L-cysteinyl-tRNA(Cys) + AMP + diphosphate. The polypeptide is Cysteine--tRNA ligase (Heliobacterium modesticaldum (strain ATCC 51547 / Ice1)).